We begin with the raw amino-acid sequence, 944 residues long: Envelope glycoprotein B (944 aa).

2 disordered regions span residues 1–37 (MGPPPPLRRQRLLLPRPSRRRPPARLASGRRSSRPGS) and 68–108 (TDGG…RVTG). Positions 1–55 (MGPPPPLRRQRLLLPRPSRRRPPARLASGRRSSRPGSSWTWYATLIASLVWYPTV) are cleaved as a signal peptide. Residues 24-37 (ARLASGRRSSRPGS) show a composition bias toward low complexity. Topologically, residues 56–785 (SSTTLEATVV…GGFVSFFTNP (730 aa)) are virion surface. A compositionally biased stretch (gly residues) spans 71–85 (GATGQASGGGGGGAG). Positions 89–99 (PSESPETSADT) are enriched in polar residues. An N-linked (GlcNAc...) asparagine; by host glycan is attached at asparagine 114. 5 cysteine pairs are disulfide-bonded: cysteine 125–cysteine 577, cysteine 142–cysteine 533, cysteine 215–cysteine 280, cysteine 372–cysteine 420, and cysteine 608–cysteine 645. The segment at 182–188 (SYAYIYT) is involved in fusion and/or binding to host membrane. A glycan (N-linked (GlcNAc...) asparagine; by host) is linked at asparagine 238. Residues 267 to 274 (GSTWLYKE) are involved in fusion and/or binding to host membrane. 7 N-linked (GlcNAc...) asparagine; by host glycosylation sites follow: asparagine 369, asparagine 409, asparagine 414, asparagine 426, asparagine 481, asparagine 485, and asparagine 620. 2 hydrophobic membrane proximal region regions span residues 731–783 (ITSK…SFFT) and 762–782 (LVLGAVGGAVASVVGGFVSFF). A helical transmembrane segment spans residues 786 to 806 (FGSLTLIILVVAVVVIVFLLY). The Intravirion portion of the chain corresponds to 807-944 (QRQRSAVRQP…RDTGSDSELA (138 aa)). 2 disordered regions span residues 834-878 (TVTT…SATA) and 902-944 (REVP…SELA). Positions 931 to 934 (YRRL) match the Internalization motif motif.

The protein belongs to the herpesviridae glycoprotein B family. In terms of assembly, homotrimer; disulfide-linked. Binds to heparan sulfate proteoglycans. Interacts with gH/gL heterodimer. Post-translationally, a proteolytic cleavage by host furin generates two subunits that remain linked by disulfide bonds.

Its subcellular location is the virion membrane. It is found in the host cell membrane. The protein localises to the host endosome membrane. It localises to the host Golgi apparatus membrane. Functionally, envelope glycoprotein that forms spikes at the surface of virion envelope. Essential for the initial attachment to heparan sulfate moieties of the host cell surface proteoglycans. Involved in fusion of viral and cellular membranes leading to virus entry into the host cell. Following initial binding to its host receptors, membrane fusion is mediated by the fusion machinery composed at least of gB and the heterodimer gH/gL. May be involved in the fusion between the virion envelope and the outer nuclear membrane during virion egress. This Tupaiid herpesvirus (strain 2) (TuHV-2) protein is Envelope glycoprotein B.